A 196-amino-acid chain; its full sequence is Imidazoleglycerol-phosphate dehydratase (196 aa).

It belongs to the imidazoleglycerol-phosphate dehydratase family.

It is found in the cytoplasm. The catalysed reaction is D-erythro-1-(imidazol-4-yl)glycerol 3-phosphate = 3-(imidazol-4-yl)-2-oxopropyl phosphate + H2O. The protein operates within amino-acid biosynthesis; L-histidine biosynthesis; L-histidine from 5-phospho-alpha-D-ribose 1-diphosphate: step 6/9. In Clostridium botulinum (strain 657 / Type Ba4), this protein is Imidazoleglycerol-phosphate dehydratase.